The following is a 413-amino-acid chain: MAPPSIFAEVPQAQPVLVFKLTADFREDPDPRKVNLGVGAYRTDDSQPWVLPVVRKVEQRIANDSSINHEYLPILGLAEFRTCASRLALGDDSPALQEKRVGGVQCLGGTGALRIGAEFLARWYNGTNNKDTPVYVSSPTWENHNGVFIAAGFKDIRSYHYWDAAKRGLDLQGFLNDLEKAPEFSIFVLHACAHNPTGTDPTPEQWKQIASVMKRRFLFPFFDSAYQGFASGSLEKDAWAIRYFVSEGFELFCAQSFSKNFGLYNERVGNLTVVAKEPDSILRVLSQMEKIVRITWSNPPAQGARIVARTLSDPELFNEWTGNVKTMADRILTMRSELRARLEALKTPGTWNHITEQIGMFSFTGLNPKQVEYLINEKHIYLLPSGRINMCGLTTKNLEYVATSIHEAVTKIQ.

L-aspartate-binding residues include glycine 39, tryptophan 141, and asparagine 195. Lysine 259 bears the N6-(pyridoxal phosphate)lysine mark. Residue arginine 387 coordinates L-aspartate.

The protein belongs to the class-I pyridoxal-phosphate-dependent aminotransferase family. Homodimer. Pyridoxal 5'-phosphate is required as a cofactor.

The protein resides in the cytoplasm. It carries out the reaction L-aspartate + 2-oxoglutarate = oxaloacetate + L-glutamate. The catalysed reaction is L-cysteine + 2-oxoglutarate = 2-oxo-3-sulfanylpropanoate + L-glutamate. It catalyses the reaction (2S)-2-aminobutanoate + 2-oxoglutarate = 2-oxobutanoate + L-glutamate. The enzyme catalyses 3-sulfino-L-alanine + 2-oxoglutarate = 3-sulfinopyruvate + L-glutamate. Biosynthesis of L-glutamate from L-aspartate or L-cysteine. Important regulator of levels of glutamate, the major excitatory neurotransmitter of the vertebrate central nervous system. Acts as a scavenger of glutamate in brain neuroprotection. The aspartate aminotransferase activity is involved in hepatic glucose synthesis during development and in adipocyte glyceroneogenesis. Using L-cysteine as substrate, regulates levels of mercaptopyruvate, an important source of hydrogen sulfide. Mercaptopyruvate is converted into H(2)S via the action of 3-mercaptopyruvate sulfurtransferase (3MST). Hydrogen sulfide is an important synaptic modulator and neuroprotectant in the brain. In Bos taurus (Bovine), this protein is Aspartate aminotransferase, cytoplasmic.